The chain runs to 794 residues: Histone-lysine N-methyltransferase, H3 lysine-9 specific SUVH5 (794 aa).

Disordered regions lie at residues V187–I210 and S254–E276. The segment covering N194–G203 has biased composition (polar residues). Residues P258–E276 are compositionally biased toward basic and acidic residues. One can recognise a YDG domain in the interval G365–R515. Residues K585 to G644 form the Pre-SET domain. The 118-residue stretch at I647–N764 folds into the SET domain. Positions K778–Y794 constitute a Post-SET domain.

Belongs to the class V-like SAM-binding methyltransferase superfamily. Histone-lysine methyltransferase family. Suvar3-9 subfamily. In terms of tissue distribution, expressed in leaves stems and flowers.

Its subcellular location is the nucleus. It localises to the chromosome. It is found in the centromere. The enzyme catalyses N(6)-methyl-L-lysyl(9)-[histone H3] + S-adenosyl-L-methionine = N(6),N(6)-dimethyl-L-lysyl(9)-[histone H3] + S-adenosyl-L-homocysteine + H(+). It catalyses the reaction L-lysyl(9)-[histone H3] + S-adenosyl-L-methionine = N(6)-methyl-L-lysyl(9)-[histone H3] + S-adenosyl-L-homocysteine + H(+). In terms of biological role, histone methyltransferase. Methylates 'Lys-9' of histone H3. H3 'Lys-9' methylation represents a specific tag for epigenetic transcriptional repression. This is Histone-lysine N-methyltransferase, H3 lysine-9 specific SUVH5 (SUVH5) from Arabidopsis thaliana (Mouse-ear cress).